Consider the following 443-residue polypeptide: 3-phosphoshikimate 1-carboxyvinyltransferase (443 aa).

K25, S26, and R30 together coordinate 3-phosphoshikimate. K25 contributes to the phosphoenolpyruvate binding site. Phosphoenolpyruvate-binding residues include G117 and R145. 3-phosphoshikimate contacts are provided by S188, S189, Q190, S217, E331, and H358. Q190 lines the phosphoenolpyruvate pocket. Residue E331 is the Proton acceptor of the active site. R362, R404, and K428 together coordinate phosphoenolpyruvate.

Belongs to the EPSP synthase family. As to quaternary structure, monomer.

The protein resides in the cytoplasm. The catalysed reaction is 3-phosphoshikimate + phosphoenolpyruvate = 5-O-(1-carboxyvinyl)-3-phosphoshikimate + phosphate. It functions in the pathway metabolic intermediate biosynthesis; chorismate biosynthesis; chorismate from D-erythrose 4-phosphate and phosphoenolpyruvate: step 6/7. Catalyzes the transfer of the enolpyruvyl moiety of phosphoenolpyruvate (PEP) to the 5-hydroxyl of shikimate-3-phosphate (S3P) to produce enolpyruvyl shikimate-3-phosphate and inorganic phosphate. The chain is 3-phosphoshikimate 1-carboxyvinyltransferase from Tropheryma whipplei (strain TW08/27) (Whipple's bacillus).